The chain runs to 134 residues: Phosphoribosyl-AMP cyclohydrolase (134 aa).

Mg(2+) is bound at residue Asp-90. A Zn(2+)-binding site is contributed by Cys-91. Residues Asp-92 and Asp-94 each coordinate Mg(2+). 2 residues coordinate Zn(2+): Cys-107 and Cys-114.

This sequence belongs to the PRA-CH family. Homodimer. Requires Mg(2+) as cofactor. Zn(2+) serves as cofactor.

Its subcellular location is the cytoplasm. The enzyme catalyses 1-(5-phospho-beta-D-ribosyl)-5'-AMP + H2O = 1-(5-phospho-beta-D-ribosyl)-5-[(5-phospho-beta-D-ribosylamino)methylideneamino]imidazole-4-carboxamide. Its pathway is amino-acid biosynthesis; L-histidine biosynthesis; L-histidine from 5-phospho-alpha-D-ribose 1-diphosphate: step 3/9. Catalyzes the hydrolysis of the adenine ring of phosphoribosyl-AMP. The sequence is that of Phosphoribosyl-AMP cyclohydrolase from Arthrobacter sp. (strain FB24).